Reading from the N-terminus, the 57-residue chain is Conotoxin Cal6.39 (57 aa).

The N-terminal stretch at 1-18 (MSGTTVLLLTCLFLVTMA) is a signal peptide. 3 disulfide bridges follow: C22–C36, C29–C46, and C35–C52.

Expressed by the venom duct.

It localises to the secreted. Probable neurotoxin. The polypeptide is Conotoxin Cal6.39 (Californiconus californicus (California cone)).